Reading from the N-terminus, the 118-residue chain is Large ribosomal subunit protein uL24 (118 aa).

It belongs to the universal ribosomal protein uL24 family. As to quaternary structure, part of the 50S ribosomal subunit.

In terms of biological role, one of two assembly initiator proteins, it binds directly to the 5'-end of the 23S rRNA, where it nucleates assembly of the 50S subunit. One of the proteins that surrounds the polypeptide exit tunnel on the outside of the subunit. The chain is Large ribosomal subunit protein uL24 from Prochlorococcus marinus subsp. pastoris (strain CCMP1986 / NIES-2087 / MED4).